An 83-amino-acid chain; its full sequence is Cytochrome b559 subunit alpha (83 aa).

A helical transmembrane segment spans residues 22–36; that stretch reads VIHSITIPALFIAGW. H24 contributes to the heme binding site.

Belongs to the PsbE/PsbF family. In terms of assembly, heterodimer of an alpha subunit and a beta subunit. PSII is composed of 1 copy each of membrane proteins PsbA, PsbB, PsbC, PsbD, PsbE, PsbF, PsbH, PsbI, PsbJ, PsbK, PsbL, PsbM, PsbT, PsbX, PsbY, PsbZ, Psb30/Ycf12, peripheral proteins PsbO, CyanoQ (PsbQ), PsbU, PsbV and a large number of cofactors. It forms dimeric complexes. Heme b serves as cofactor.

It localises to the cellular thylakoid membrane. Its function is as follows. This b-type cytochrome is tightly associated with the reaction center of photosystem II (PSII). PSII is a light-driven water:plastoquinone oxidoreductase that uses light energy to abstract electrons from H(2)O, generating O(2) and a proton gradient subsequently used for ATP formation. It consists of a core antenna complex that captures photons, and an electron transfer chain that converts photonic excitation into a charge separation. This chain is Cytochrome b559 subunit alpha, found in Synechococcus elongatus (strain ATCC 33912 / PCC 7942 / FACHB-805) (Anacystis nidulans R2).